The primary structure comprises 309 residues: Putative glycosyltransferase 48 (309 aa).

It belongs to the glycosyltransferase group 1 family. Glycosyltransferase 4 subfamily.

The protein is Putative glycosyltransferase 48 (SIFV0048) of Saccharolobus islandicus (Sulfolobus islandicus).